The sequence spans 384 residues: MFEPSELSNNAIIKVIGVGGGGSNAVEHMVRERIEGVEFFAINTDAQALRKIEVGQTIQIGNNITKGLGAGANPEIGRTSAEEDKELLKSALDGSDMVFIAAGMGGGTGTGAAPVVAEIAKELGILTVAVVTKPFNFEGKKRMIVAEQGIIELSKYVDSLIIIPNDKLLKVLSRGISLLDAFSAANNVLKGAVQGIAELITRPGLMNVDFADVRTVMLEMGYAMMGTGISSGENRAEEASEIAISSPLLEDIDLSGARGVLVNITAGFDLKLDEFETVGNTIRSFSSDHATVVIGTSLDPDMNDTLRVTVVATGIGMEKNLDVNQIKNKSSREVLMDYRYQYLNISPKKTDKKIIKKEIKNTKEKINKEPEYLDIPSFLRKRAD.

Residues 20–24 (GGGSN), 107–109 (GTG), E138, R142, and N186 each bind GTP.

Belongs to the FtsZ family. In terms of assembly, homodimer. Polymerizes to form a dynamic ring structure in a strictly GTP-dependent manner. Interacts directly with several other division proteins.

It is found in the cytoplasm. Functionally, essential cell division protein that forms a contractile ring structure (Z ring) at the future cell division site. The regulation of the ring assembly controls the timing and the location of cell division. One of the functions of the FtsZ ring is to recruit other cell division proteins to the septum to produce a new cell wall between the dividing cells. Binds GTP and shows GTPase activity. The sequence is that of Cell division protein FtsZ from Buchnera aphidicola subsp. Acyrthosiphon pisum (strain APS) (Acyrthosiphon pisum symbiotic bacterium).